The primary structure comprises 263 residues: Putative cysteine-rich repeat secretory protein 31 (263 aa).

A signal peptide spans 1-32 (MHNSYSLSKRLVLVLFLAVVATQLFLIRNVSS). 2 consecutive Gnk2-homologous domains span residues 39-141 (YLHH…AIEV) and 146-260 (YDNN…FYPF).

The protein belongs to the cysteine-rich repeat secretory protein family.

The protein resides in the secreted. The protein is Putative cysteine-rich repeat secretory protein 31 (CRRSP31) of Arabidopsis thaliana (Mouse-ear cress).